The primary structure comprises 516 residues: L-amino-acid oxidase (516 aa).

The N-terminal stretch at 1 to 18 is a signal peptide; the sequence is MNVFFMFSLLFLAALGSC. An intrachain disulfide couples C28 to C189. FAD is bound by residues 61 to 62, 81 to 82, R89, and 103 to 106; these read MA, EA, and GPMR. Substrate is bound by residues R106 and H239. V279 is a binding site for FAD. A disulfide bond links C349 and C430. N379 is a glycosylation site (N-linked (GlcNAc...) asparagine). Y390 serves as a coordination point for substrate. FAD is bound by residues E475 and 482–487; that span reads GWIDST. 482 to 483 provides a ligand contact to substrate; sequence GW.

This sequence belongs to the flavin monoamine oxidase family. FIG1 subfamily. In terms of assembly, homodimer; non-covalently linked. It depends on FAD as a cofactor. In terms of processing, N-glycosylated. As to expression, expressed by the venom gland.

The protein localises to the secreted. The enzyme catalyses an L-alpha-amino acid + O2 + H2O = a 2-oxocarboxylate + H2O2 + NH4(+). It carries out the reaction L-leucine + O2 + H2O = 4-methyl-2-oxopentanoate + H2O2 + NH4(+). It catalyses the reaction L-phenylalanine + O2 + H2O = 3-phenylpyruvate + H2O2 + NH4(+). The catalysed reaction is L-methionine + O2 + H2O = 4-methylsulfanyl-2-oxobutanoate + H2O2 + NH4(+). The enzyme catalyses L-arginine + O2 + H2O = 5-guanidino-2-oxopentanoate + H2O2 + NH4(+). Its function is as follows. Catalyzes an oxidative deamination of predominantly hydrophobic and aromatic L-amino acids, thus producing hydrogen peroxide that may contribute to the diverse toxic effects of this enzyme. Is active on L-Arg, L-Phe, L-Met, and L-Leu and is weakly active on L-Val. Exhibits diverse biological activities, such as hemorrhage, hemolysis, edema, apoptosis of vascular endothelial cells or tumor cell lines, antibacterial and antiparasitic activities, as well as regulation of platelet aggregation. Its effect on platelets is controversial, since it either induces aggregation or inhibits agonist-induced aggregation. These different effects are probably due to different experimental conditions. This is L-amino-acid oxidase from Crotalus adamanteus (Eastern diamondback rattlesnake).